A 238-amino-acid polypeptide reads, in one-letter code: UDP-2,3-diacylglucosamine hydrolase (238 aa).

Positions 8, 10, 41, 78, and 113 each coordinate Mn(2+). A substrate-binding site is contributed by 78–79; sequence NR. Residues aspartate 121, serine 159, asparagine 163, lysine 166, and histidine 194 each contribute to the substrate site. The Mn(2+) site is built by histidine 194 and histidine 196.

It belongs to the LpxH family. Mn(2+) is required as a cofactor.

The protein localises to the cell inner membrane. It catalyses the reaction UDP-2-N,3-O-bis[(3R)-3-hydroxytetradecanoyl]-alpha-D-glucosamine + H2O = 2-N,3-O-bis[(3R)-3-hydroxytetradecanoyl]-alpha-D-glucosaminyl 1-phosphate + UMP + 2 H(+). It participates in glycolipid biosynthesis; lipid IV(A) biosynthesis; lipid IV(A) from (3R)-3-hydroxytetradecanoyl-[acyl-carrier-protein] and UDP-N-acetyl-alpha-D-glucosamine: step 4/6. Functionally, hydrolyzes the pyrophosphate bond of UDP-2,3-diacylglucosamine to yield 2,3-diacylglucosamine 1-phosphate (lipid X) and UMP by catalyzing the attack of water at the alpha-P atom. Involved in the biosynthesis of lipid A, a phosphorylated glycolipid that anchors the lipopolysaccharide to the outer membrane of the cell. The sequence is that of UDP-2,3-diacylglucosamine hydrolase from Shewanella piezotolerans (strain WP3 / JCM 13877).